Reading from the N-terminus, the 142-residue chain is Small ribosomal subunit protein uS12 (142 aa).

The segment at 1 to 44 is disordered; it reads MTNGKYAARKLKKDRQQRRWSDSEYARRERGLGKKSDPLEGAPQ. Residues 7-16 are compositionally biased toward basic residues; sequence AARKLKKDRQ. Positions 17 to 38 are enriched in basic and acidic residues; sequence QRRWSDSEYARRERGLGKKSDP.

This sequence belongs to the universal ribosomal protein uS12 family. Part of the 30S ribosomal subunit.

Its function is as follows. With S4 and S5 plays an important role in translational accuracy. Located at the interface of the 30S and 50S subunits. The sequence is that of Small ribosomal subunit protein uS12 from Halobacterium salinarum (strain ATCC 29341 / DSM 671 / R1).